Consider the following 355-residue polypeptide: Peptide chain release factor 1 (355 aa).

Q232 carries the post-translational modification N5-methylglutamine. Positions 282–309 are disordered; sequence EQNASISAERKSQVGSGDRSERIRTYNY. Basic and acidic residues predominate over residues 289-305; the sequence is AERKSQVGSGDRSERIR.

Belongs to the prokaryotic/mitochondrial release factor family. Post-translationally, methylated by PrmC. Methylation increases the termination efficiency of RF1.

The protein localises to the cytoplasm. Functionally, peptide chain release factor 1 directs the termination of translation in response to the peptide chain termination codons UAG and UAA. This Desulfatibacillum aliphaticivorans protein is Peptide chain release factor 1.